Consider the following 421-residue polypeptide: Indole-3-pyruvate monooxygenase YUCCA8 (421 aa).

30 to 35 is an FAD binding site; it reads GAGPSG. An NADP(+)-binding site is contributed by 201 to 206; the sequence is GCGNSG.

This sequence belongs to the FMO family. FAD is required as a cofactor. In terms of tissue distribution, expressed in organs undergoing active growth and cell division.

Its subcellular location is the endoplasmic reticulum. It carries out the reaction indole-3-pyruvate + NADPH + O2 + H(+) = (indol-3-yl)acetate + CO2 + NADP(+) + H2O. Involved in auxin biosynthesis. Converts the indole-3-pyruvic acid (IPA) produced by the TAA family to indole-3-acetic acid (IAA). Seems not able to use tryptamine (TAM) as substrate. Probably responsible for auxin biosynthesis in leaves and involved in the regulation of lateral leaf growth. Required for maintaining water homeostasis and an appropriate root to shoot ratio. Required for the inhibition of root growth by ethylene in etiolated seedlings. Functions downstream of the ethylene-response transcription factor EIL1. This is Indole-3-pyruvate monooxygenase YUCCA8 from Oryza sativa subsp. indica (Rice).